We begin with the raw amino-acid sequence, 237 residues long: Phosphoribosylaminoimidazole-succinocarboxamide synthase (237 aa).

This sequence belongs to the SAICAR synthetase family.

The enzyme catalyses 5-amino-1-(5-phospho-D-ribosyl)imidazole-4-carboxylate + L-aspartate + ATP = (2S)-2-[5-amino-1-(5-phospho-beta-D-ribosyl)imidazole-4-carboxamido]succinate + ADP + phosphate + 2 H(+). The protein operates within purine metabolism; IMP biosynthesis via de novo pathway; 5-amino-1-(5-phospho-D-ribosyl)imidazole-4-carboxamide from 5-amino-1-(5-phospho-D-ribosyl)imidazole-4-carboxylate: step 1/2. This is Phosphoribosylaminoimidazole-succinocarboxamide synthase from Halalkalibacterium halodurans (strain ATCC BAA-125 / DSM 18197 / FERM 7344 / JCM 9153 / C-125) (Bacillus halodurans).